We begin with the raw amino-acid sequence, 264 residues long: Indole-3-glycerol phosphate synthase (264 aa).

It belongs to the TrpC family.

It carries out the reaction 1-(2-carboxyphenylamino)-1-deoxy-D-ribulose 5-phosphate + H(+) = (1S,2R)-1-C-(indol-3-yl)glycerol 3-phosphate + CO2 + H2O. Its pathway is amino-acid biosynthesis; L-tryptophan biosynthesis; L-tryptophan from chorismate: step 4/5. The polypeptide is Indole-3-glycerol phosphate synthase (Carboxydothermus hydrogenoformans (strain ATCC BAA-161 / DSM 6008 / Z-2901)).